The sequence spans 240 residues: Ribonuclease PH (240 aa).

Phosphate contacts are provided by residues Arg-86 and 124-126 (GTR).

It belongs to the RNase PH family. In terms of assembly, homohexameric ring arranged as a trimer of dimers.

The catalysed reaction is tRNA(n+1) + phosphate = tRNA(n) + a ribonucleoside 5'-diphosphate. Phosphorolytic 3'-5' exoribonuclease that plays an important role in tRNA 3'-end maturation. Removes nucleotide residues following the 3'-CCA terminus of tRNAs; can also add nucleotides to the ends of RNA molecules by using nucleoside diphosphates as substrates, but this may not be physiologically important. Probably plays a role in initiation of 16S rRNA degradation (leading to ribosome degradation) during starvation. The protein is Ribonuclease PH of Rickettsia prowazekii (strain Madrid E).